A 247-amino-acid polypeptide reads, in one-letter code: Ubiquinone biosynthesis O-methyltransferase (247 aa).

Residues Arg39, Gly70, Asp91, and Met134 each contribute to the S-adenosyl-L-methionine site.

It belongs to the methyltransferase superfamily. UbiG/COQ3 family.

The enzyme catalyses a 3-demethylubiquinol + S-adenosyl-L-methionine = a ubiquinol + S-adenosyl-L-homocysteine + H(+). It catalyses the reaction a 3-(all-trans-polyprenyl)benzene-1,2-diol + S-adenosyl-L-methionine = a 2-methoxy-6-(all-trans-polyprenyl)phenol + S-adenosyl-L-homocysteine + H(+). It participates in cofactor biosynthesis; ubiquinone biosynthesis. Its function is as follows. O-methyltransferase that catalyzes the 2 O-methylation steps in the ubiquinone biosynthetic pathway. The protein is Ubiquinone biosynthesis O-methyltransferase of Cereibacter sphaeroides (strain KD131 / KCTC 12085) (Rhodobacter sphaeroides).